A 762-amino-acid chain; its full sequence is FAST kinase domain-containing protein 5, mitochondrial (762 aa).

A Phosphoserine modification is found at Ser-95. Lys-506 carries the N6-acetyllysine modification. The RAP domain maps to 695-755 (LAIQFTNKNQ…RLEKLAYLHE (61 aa)).

It belongs to the FAST kinase family. In terms of assembly, found in a complex with GRSF1, DDX28, DHX30 and FASTKD2. Associates with the 12S mitochondrial rRNA (12S mt-rRNA). Expression detected in spleen, testis, colon, heart, smooth muscle, kidney, brain, lung, liver, brown and white adipose tissue.

The protein resides in the mitochondrion matrix. It localises to the mitochondrion nucleoid. Its function is as follows. Plays an important role in the processing of non-canonical mitochondrial mRNA precursors. This Mus musculus (Mouse) protein is FAST kinase domain-containing protein 5, mitochondrial (Fastkd5).